A 186-amino-acid polypeptide reads, in one-letter code: GMP synthase [glutamine-hydrolyzing] subunit A (186 aa).

Residues 2–186 (SIVIINNFGQ…ENFNKICENY (185 aa)) form the Glutamine amidotransferase type-1 domain. The Nucleophile role is filled by Cys76. Residues His163 and Glu165 contribute to the active site.

In terms of assembly, heterodimer composed of a glutamine amidotransferase subunit (A) and a GMP-binding subunit (B).

The enzyme catalyses XMP + L-glutamine + ATP + H2O = GMP + L-glutamate + AMP + diphosphate + 2 H(+). It functions in the pathway purine metabolism; GMP biosynthesis; GMP from XMP (L-Gln route): step 1/1. In terms of biological role, catalyzes the synthesis of GMP from XMP. This Methanosphaera stadtmanae (strain ATCC 43021 / DSM 3091 / JCM 11832 / MCB-3) protein is GMP synthase [glutamine-hydrolyzing] subunit A.